The primary structure comprises 400 residues: Elongation factor Tu (400 aa).

Positions 10–209 constitute a tr-type G domain; sequence KPHVNIGTIG…EVDNYIPTPE (200 aa). A G1 region spans residues 19–26; sequence GHVDHGKT. Residue 19 to 26 coordinates GTP; that stretch reads GHVDHGKT. Threonine 26 contributes to the Mg(2+) binding site. The G2 stretch occupies residues 60-64; that stretch reads GITIN. A G3 region spans residues 81-84; it reads DCPG. GTP-binding positions include 81 to 85 and 136 to 139; these read DCPGH and NKCD. Positions 136–139 are G4; the sequence is NKCD. The tract at residues 174–176 is G5; that stretch reads SAL.

Belongs to the TRAFAC class translation factor GTPase superfamily. Classic translation factor GTPase family. EF-Tu/EF-1A subfamily. In terms of assembly, monomer.

The protein resides in the cytoplasm. It catalyses the reaction GTP + H2O = GDP + phosphate + H(+). In terms of biological role, GTP hydrolase that promotes the GTP-dependent binding of aminoacyl-tRNA to the A-site of ribosomes during protein biosynthesis. This chain is Elongation factor Tu, found in Ruminiclostridium cellulolyticum (strain ATCC 35319 / DSM 5812 / JCM 6584 / H10) (Clostridium cellulolyticum).